The sequence spans 246 residues: tRNA pseudouridine synthase A (246 aa).

Residue aspartate 52 is the Nucleophile of the active site. Tyrosine 111 provides a ligand contact to substrate.

The protein belongs to the tRNA pseudouridine synthase TruA family. Homodimer.

It carries out the reaction uridine(38/39/40) in tRNA = pseudouridine(38/39/40) in tRNA. Formation of pseudouridine at positions 38, 39 and 40 in the anticodon stem and loop of transfer RNAs. This is tRNA pseudouridine synthase A from Rhodopseudomonas palustris (strain BisA53).